The chain runs to 313 residues: Carbamate kinase (313 aa).

It belongs to the carbamate kinase family.

It is found in the cytoplasm. The catalysed reaction is hydrogencarbonate + NH4(+) + ATP = carbamoyl phosphate + ADP + H2O + H(+). Its pathway is metabolic intermediate metabolism; carbamoyl phosphate degradation; CO(2) and NH(3) from carbamoyl phosphate: step 1/1. In Oenococcus oeni (Leuconostoc oenos), this protein is Carbamate kinase (arcC).